The chain runs to 163 residues: Probable chemoreceptor glutamine deamidase CheD (163 aa).

This sequence belongs to the CheD family.

The enzyme catalyses L-glutaminyl-[protein] + H2O = L-glutamyl-[protein] + NH4(+). Its function is as follows. Probably deamidates glutamine residues to glutamate on methyl-accepting chemotaxis receptors (MCPs), playing an important role in chemotaxis. In Pyrococcus abyssi (strain GE5 / Orsay), this protein is Probable chemoreceptor glutamine deamidase CheD.